Consider the following 259-residue polypeptide: Phosphoribosylaminoimidazole-succinocarboxamide synthase (259 aa).

Belongs to the SAICAR synthetase family.

It carries out the reaction 5-amino-1-(5-phospho-D-ribosyl)imidazole-4-carboxylate + L-aspartate + ATP = (2S)-2-[5-amino-1-(5-phospho-beta-D-ribosyl)imidazole-4-carboxamido]succinate + ADP + phosphate + 2 H(+). Its pathway is purine metabolism; IMP biosynthesis via de novo pathway; 5-amino-1-(5-phospho-D-ribosyl)imidazole-4-carboxamide from 5-amino-1-(5-phospho-D-ribosyl)imidazole-4-carboxylate: step 1/2. This is Phosphoribosylaminoimidazole-succinocarboxamide synthase from Zymomonas mobilis subsp. mobilis (strain ATCC 31821 / ZM4 / CP4).